A 92-amino-acid chain; its full sequence is Elongation factor 1-beta (92 aa).

This sequence belongs to the EF-1-beta/EF-1-delta family.

In terms of biological role, promotes the exchange of GDP for GTP in EF-1-alpha/GDP, thus allowing the regeneration of EF-1-alpha/GTP that could then be used to form the ternary complex EF-1-alpha/GTP/AAtRNA. The chain is Elongation factor 1-beta from Pyrobaculum neutrophilum (strain DSM 2338 / JCM 9278 / NBRC 100436 / V24Sta) (Thermoproteus neutrophilus).